The following is a 95-amino-acid chain: Defensin alpha 4 (95 aa).

A signal peptide spans 1–19 (MRTLALLAAILLVALQAQA). Residues 20–62 (EHISVSIDEVVDQQPPQAEDQDVAIYVKEHESSALEALGVKAG) constitute a propeptide that is removed on maturation. Intrachain disulfides connect cysteine 65–cysteine 93, cysteine 67–cysteine 82, and cysteine 72–cysteine 92.

It belongs to the alpha-defensin family.

Its subcellular location is the secreted. Its function is as follows. Host-defense peptide that has antimicrobial activity. Inhibits corticotropin (ACTH)-stimulated corticosterone production (in vitro). The sequence is that of Defensin alpha 4 from Oryctolagus cuniculus (Rabbit).